We begin with the raw amino-acid sequence, 217 residues long: Meiotically up-regulated gene 37 protein (217 aa).

In terms of biological role, has a role in meiosis. This Schizosaccharomyces pombe (strain 972 / ATCC 24843) (Fission yeast) protein is Meiotically up-regulated gene 37 protein (mug37).